The sequence spans 119 residues: Large ribosomal subunit protein bL20c (119 aa).

Belongs to the bacterial ribosomal protein bL20 family.

It localises to the plastid. The protein localises to the chloroplast. Functionally, binds directly to 23S ribosomal RNA and is necessary for the in vitro assembly process of the 50S ribosomal subunit. It is not involved in the protein synthesizing functions of that subunit. This Oedogonium cardiacum (Filamentous green alga) protein is Large ribosomal subunit protein bL20c.